Reading from the N-terminus, the 379-residue chain is MKRDLYETLGVQKNADEKELKSAFRKLAMKYHPDRNPGDQESEKSFKEINEAYETLKDPQKRAAYDRYGHAAFEQGGMGAGFGNGFAGGGAHGFSDIFEDIFGEMMGGRQRRSSGGRERGADLRYNMEISLEEAYSGKTAQIRVPTSITCDVCTGTGAKPGTSPKTCGTCQGTGRVRAAQGFFSIERTCPTCGGRGQTIADPCTKCHGQGRVVEERTLSVNIPAGIEDGTRIRLSGEGEAGLRGGPAGDLYIFLSVKPHEFYQRDGADLYCAVPISMTTAALGGKFDVTTLDGTKSRVTVPEGTQAGKQFRLKGKGMPVLRSSQTGDLYIQIQIETPQKLTKRQRELLQEFEQISSKENNPESTGFFSRMKDFFDTLSE.

The 66-residue stretch at 4–69 folds into the J domain; sequence DLYETLGVQK…QKRAAYDRYG (66 aa). A CR-type zinc finger spans residues 137 to 215; that stretch reads GKTAQIRVPT…CHGQGRVVEE (79 aa). Residues cysteine 150, cysteine 153, cysteine 167, cysteine 170, cysteine 189, cysteine 192, cysteine 203, and cysteine 206 each contribute to the Zn(2+) site. 4 CXXCXGXG motif repeats span residues 150 to 157, 167 to 174, 189 to 196, and 203 to 210; these read CDVCTGTG, CGTCQGTG, CPTCGGRG, and CTKCHGQG.

This sequence belongs to the DnaJ family. In terms of assembly, homodimer. Zn(2+) is required as a cofactor.

Its subcellular location is the cytoplasm. Participates actively in the response to hyperosmotic and heat shock by preventing the aggregation of stress-denatured proteins and by disaggregating proteins, also in an autonomous, DnaK-independent fashion. Unfolded proteins bind initially to DnaJ; upon interaction with the DnaJ-bound protein, DnaK hydrolyzes its bound ATP, resulting in the formation of a stable complex. GrpE releases ADP from DnaK; ATP binding to DnaK triggers the release of the substrate protein, thus completing the reaction cycle. Several rounds of ATP-dependent interactions between DnaJ, DnaK and GrpE are required for fully efficient folding. Also involved, together with DnaK and GrpE, in the DNA replication of plasmids through activation of initiation proteins. The sequence is that of Chaperone protein DnaJ from Rhizobium meliloti (strain 1021) (Ensifer meliloti).